A 198-amino-acid chain; its full sequence is Syndecan-4 (198 aa).

The first 18 residues, 1-18 (MAPARLFALLLLFVGGVA), serve as a signal peptide directing secretion. Topologically, residues 19-145 (ESIRETEVID…QGSNIFERTE (127 aa)) are extracellular. Residues Ser39, Ser61, and Ser63 are each glycosylated (O-linked (Xyl...) (glycosaminoglycan) serine). O-linked (Xyl...) (chondroitin sulfate) serine glycosylation occurs at Ser95. The chain crosses the membrane as a helical span at residues 146-170 (VLAALIVGGIVGILFAVFLILLLMY). Topologically, residues 171 to 198 (RMKKKDEGSYDLGKKPIYKKAPTNEFYA) are cytoplasmic.

The protein belongs to the syndecan proteoglycan family. Homodimer. Interacts with CDCP1 and SDCBP. Interacts (via its cytoplasmic domain) with GIPC (via its PDZ domain). Interacts (via its cytoplasmic domain) with NUDT16L1. Interacts with DNM2; this interaction is markedly enhanced at focal ahesion site upon induction of focal adhesions and stress-fiber formation. Post-translationally, shedding is enhanced by a number of factors such as heparanase, thrombin or EGF. Also by stress and wound healing. PMA-mediated shedding is inhibited by TIMP3. O-glycosylated; contains both chondroitin sulfate and heparan sulfate. Ser-39, Ser-61 and Ser-63 can all be modified by either chondroitin sulfate or heparan sulfate, and the protein exists in forms that contain only chondroitin sulfate, only heparan sulfate and both chondroitin sulfate and heparan sulfate.

It localises to the membrane. The protein localises to the secreted. In terms of biological role, cell surface proteoglycan which regulates exosome biogenesis in concert with SDCBP and PDCD6IP. This is Syndecan-4 from Pongo abelii (Sumatran orangutan).